Reading from the N-terminus, the 866-residue chain is DNA topoisomerase 3-beta (866 aa).

The 146-residue stretch at 4–149 (TVLMVAEKPS…RIFRAKFSSV (146 aa)) folds into the Toprim domain. The Mg(2+) site is built by E10, D114, and D116. The Topo IA-type catalytic domain occupies 165 to 585 (SKDEALAVDA…HVLQQFMKKY (421 aa)). The interval 207–212 (SYGPCQ) is interaction with DNA. Y329 acts as the O-(5'-phospho-DNA)-tyrosine intermediate in catalysis. A compositionally biased stretch (basic residues) spans 830-853 (MRRGRGRGRGRGRGRGSSRGRRGS). The segment at 830-866 (MRRGRGRGRGRGRGRGSSRGRRGSSRHDDPKMSFRDF) is disordered. The span at 854 to 866 (SRHDDPKMSFRDF) shows a compositional bias: basic and acidic residues.

It belongs to the type IA topoisomerase family. It depends on Mg(2+) as a cofactor.

The catalysed reaction is ATP-independent breakage of single-stranded DNA, followed by passage and rejoining.. Functionally, releases the supercoiling and torsional tension of DNA introduced during the DNA replication and transcription by transiently cleaving and rejoining one strand of the DNA duplex. Introduces a single-strand break via transesterification at a target site in duplex DNA. The scissile phosphodiester is attacked by the catalytic tyrosine of the enzyme, resulting in the formation of a DNA-(5'-phosphotyrosyl)-enzyme intermediate and the expulsion of a 3'-OH DNA strand. The free DNA strand than undergoes passage around the unbroken strand thus removing DNA supercoils. Finally, in the religation step, the DNA 3'-OH attacks the covalent intermediate to expel the active-site tyrosine and restore the DNA phosphodiester backbone. This is DNA topoisomerase 3-beta (TOP3B) from Oryza sativa subsp. japonica (Rice).